We begin with the raw amino-acid sequence, 549 residues long: Undecaprenyl phosphate-alpha-4-amino-4-deoxy-L-arabinose arabinosyl transferase (549 aa).

Helical transmembrane passes span 9 to 29, 80 to 100, 112 to 132, 136 to 156, 176 to 196, 204 to 224, 256 to 276, 288 to 308, 312 to 332, 346 to 366, 376 to 396, and 402 to 422; these read LLLI…GLWI, LFGV…LAYL, SLAC…SGYA, PQFT…LDAG, FLTK…PYML, LLGY…PWAL, PWWF…GLLP, QPPV…FSLS, LPTY…HALV, NGLL…YLQL, FELF…LAQW, and AWAA…AAMP.

This sequence belongs to the glycosyltransferase 83 family.

It is found in the cell inner membrane. The catalysed reaction is 4-amino-4-deoxy-alpha-L-arabinopyranosyl di-trans,octa-cis-undecaprenyl phosphate + lipid IVA = lipid IIA + di-trans,octa-cis-undecaprenyl phosphate.. It participates in lipopolysaccharide metabolism; 4-amino-4-deoxy-beta-L-arabinose-lipid A biosynthesis. Its function is as follows. Catalyzes the transfer of the L-Ara4N moiety of the glycolipid undecaprenyl phosphate-alpha-L-Ara4N to lipid A. The modified arabinose is attached to lipid A and is required for resistance to polymyxin and cationic antimicrobial peptides. The chain is Undecaprenyl phosphate-alpha-4-amino-4-deoxy-L-arabinose arabinosyl transferase from Pseudomonas paraeruginosa (strain DSM 24068 / PA7) (Pseudomonas aeruginosa (strain PA7)).